A 117-amino-acid chain; its full sequence is Photosystem II reaction center Psb28 protein (117 aa).

Belongs to the Psb28 family. Part of the photosystem II complex.

The protein resides in the cellular thylakoid membrane. This is Photosystem II reaction center Psb28 protein from Prochlorococcus marinus (strain MIT 9515).